Reading from the N-terminus, the 99-residue chain is DNA-directed RNA polymerase subunit omega (99 aa).

Belongs to the RNA polymerase subunit omega family. In terms of assembly, the RNAP catalytic core consists of 2 alpha, 1 beta, 1 beta' and 1 omega subunit. When a sigma factor is associated with the core the holoenzyme is formed, which can initiate transcription.

The enzyme catalyses RNA(n) + a ribonucleoside 5'-triphosphate = RNA(n+1) + diphosphate. Functionally, promotes RNA polymerase assembly. Latches the N- and C-terminal regions of the beta' subunit thereby facilitating its interaction with the beta and alpha subunits. The polypeptide is DNA-directed RNA polymerase subunit omega (Xylella fastidiosa (strain Temecula1 / ATCC 700964)).